The primary structure comprises 207 residues: ATP phosphoribosyltransferase (207 aa).

The protein belongs to the ATP phosphoribosyltransferase family. Short subfamily. In terms of assembly, heteromultimer composed of HisG and HisZ subunits.

Its subcellular location is the cytoplasm. It catalyses the reaction 1-(5-phospho-beta-D-ribosyl)-ATP + diphosphate = 5-phospho-alpha-D-ribose 1-diphosphate + ATP. Its pathway is amino-acid biosynthesis; L-histidine biosynthesis; L-histidine from 5-phospho-alpha-D-ribose 1-diphosphate: step 1/9. Functionally, catalyzes the condensation of ATP and 5-phosphoribose 1-diphosphate to form N'-(5'-phosphoribosyl)-ATP (PR-ATP). Has a crucial role in the pathway because the rate of histidine biosynthesis seems to be controlled primarily by regulation of HisG enzymatic activity. This is ATP phosphoribosyltransferase from Geobacillus kaustophilus (strain HTA426).